A 156-amino-acid polypeptide reads, in one-letter code: Small ribosomal subunit protein uS7 (156 aa).

It belongs to the universal ribosomal protein uS7 family. In terms of assembly, part of the 30S ribosomal subunit. Contacts proteins S9 and S11.

Its function is as follows. One of the primary rRNA binding proteins, it binds directly to 16S rRNA where it nucleates assembly of the head domain of the 30S subunit. Is located at the subunit interface close to the decoding center, probably blocks exit of the E-site tRNA. The polypeptide is Small ribosomal subunit protein uS7 (Rhodococcus erythropolis (strain PR4 / NBRC 100887)).